Reading from the N-terminus, the 85-residue chain is UPF0335 protein WP0746 (85 aa).

It belongs to the UPF0335 family.

In Wolbachia pipientis subsp. Culex pipiens (strain wPip), this protein is UPF0335 protein WP0746.